The primary structure comprises 88 residues: Low calcium response locus protein S (88 aa).

Belongs to the transposase 8 family.

The protein is Low calcium response locus protein S (lcrS) of Yersinia pestis.